A 479-amino-acid polypeptide reads, in one-letter code: Bifunctional protein HldE (479 aa).

Residues 1-322 (MIDDFRFGRI…RELLQEMPET (322 aa)) form a ribokinase region. ATP is bound at residue 198–201 (NRIE). D267 is a catalytic residue. The cytidylyltransferase stretch occupies residues 347 to 479 (FTNGCFDLVH…LVRGMQSAPS (133 aa)).

In the N-terminal section; belongs to the carbohydrate kinase PfkB family. This sequence in the C-terminal section; belongs to the cytidylyltransferase family. As to quaternary structure, homodimer.

It carries out the reaction D-glycero-beta-D-manno-heptose 7-phosphate + ATP = D-glycero-beta-D-manno-heptose 1,7-bisphosphate + ADP + H(+). It catalyses the reaction D-glycero-beta-D-manno-heptose 1-phosphate + ATP + H(+) = ADP-D-glycero-beta-D-manno-heptose + diphosphate. It functions in the pathway nucleotide-sugar biosynthesis; ADP-L-glycero-beta-D-manno-heptose biosynthesis; ADP-L-glycero-beta-D-manno-heptose from D-glycero-beta-D-manno-heptose 7-phosphate: step 1/4. Its pathway is nucleotide-sugar biosynthesis; ADP-L-glycero-beta-D-manno-heptose biosynthesis; ADP-L-glycero-beta-D-manno-heptose from D-glycero-beta-D-manno-heptose 7-phosphate: step 3/4. Catalyzes the phosphorylation of D-glycero-D-manno-heptose 7-phosphate at the C-1 position to selectively form D-glycero-beta-D-manno-heptose-1,7-bisphosphate. Its function is as follows. Catalyzes the ADP transfer from ATP to D-glycero-beta-D-manno-heptose 1-phosphate, yielding ADP-D-glycero-beta-D-manno-heptose. The sequence is that of Bifunctional protein HldE from Gluconobacter oxydans (strain 621H) (Gluconobacter suboxydans).